A 344-amino-acid chain; its full sequence is Phenylalanine--tRNA ligase alpha subunit (344 aa).

Glu256 is a Mg(2+) binding site.

The protein belongs to the class-II aminoacyl-tRNA synthetase family. Phe-tRNA synthetase alpha subunit type 1 subfamily. In terms of assembly, tetramer of two alpha and two beta subunits. The cofactor is Mg(2+).

It localises to the cytoplasm. It catalyses the reaction tRNA(Phe) + L-phenylalanine + ATP = L-phenylalanyl-tRNA(Phe) + AMP + diphosphate + H(+). In Onion yellows phytoplasma (strain OY-M), this protein is Phenylalanine--tRNA ligase alpha subunit.